The following is a 304-amino-acid chain: Thyroxine 5-deiodinase (304 aa).

Positions 1-23 are disordered; the sequence is MPRQATSRLVVGEGEGSQGASGP. The Cytoplasmic portion of the chain corresponds to 1 to 44; it reads MPRQATSRLVVGEGEGSQGASGPAATMLRSLLLHSLRLCAQTAS. Residues 45 to 67 form a helical; Signal-anchor for type II membrane protein membrane-spanning segment; the sequence is CLVLFPRFLGTAFMLWLLDFLCI. The Extracellular portion of the chain corresponds to 68 to 304; the sequence is RKHFLGRRRR…QLHGARPRRV (237 aa). A disordered region spans residues 78-99; the sequence is GQPEPEVELNSEGEEVPPDDPP. The span at 82 to 95 shows a compositional bias: acidic residues; it reads PEVELNSEGEEVPP. Residue Sec170 is part of the active site. A non-standard amino acid (selenocysteine) is located at residue Sec170.

The protein belongs to the iodothyronine deiodinase family. As to quaternary structure, monomer. Homodimer. May undergo minor heretodimerization with DIO1 and DIO2. In terms of tissue distribution, expressed in placenta and several fetal tissues.

It localises to the cell membrane. The protein localises to the endosome membrane. The enzyme catalyses 3,3',5'-triiodo-L-thyronine + iodide + A + H(+) = L-thyroxine + AH2. It catalyses the reaction 3,3'-diiodo-L-thyronine + iodide + A + H(+) = 3,3',5-triiodo-L-thyronine + AH2. The catalysed reaction is 3-iodo-L-thyronine + iodide + A + H(+) = 3,5-diiodo-L-thyronine + AH2. It carries out the reaction L-thyronine + iodide + A + H(+) = 3-iodo-L-thyronine + AH2. The enzyme catalyses 3',5'-diiodo-L-thyronine + iodide + A + H(+) = 3,3',5'-triiodo-L-thyronine + AH2. It catalyses the reaction 3'-iodo-L-thyronine + iodide + A + H(+) = 3,3'-diiodo-L-thyronine + AH2. The catalysed reaction is 3,3',5'-triiodothyronamine + iodide + A + H(+) = 3,3',5,5'-tetraiodothyronamine + AH2. It carries out the reaction 3',5'-diiodothyronamine + iodide + A + H(+) = 3,3',5'-triiodothyronamine + AH2. The enzyme catalyses 3,3'-diiodothyronamine + iodide + A + H(+) = 3,3',5-triiodothyronamine + AH2. It catalyses the reaction 3-iodothyronamine + iodide + A + H(+) = 3,5-diiodothyronamine + AH2. The catalysed reaction is 3'-iodothyronamine + iodide + A + H(+) = 3,3'-diiodothyronamine + AH2. It carries out the reaction thyronamine + iodide + A + H(+) = 3-iodothyronamine + AH2. In terms of biological role, plays a crucial role in the metabolism of thyroid hormones (TH) and has specific roles in TH activation and inactivation by deiodination. Catalyzes the deiodination of L-thyroxine (T4) to 3,3',5'-triiodothyronine (rT3), 3,5,3'-triiodothyronine (T3) to 3,3'-diiodothyronine (3,3'-T2), 3,5-diiodothyronine (3,5-T2) to 3-monoiodothyronine (3-T1), rT3 to 3',5'-diiodothyronine (3',5'-T2) and 3,3'-T2 to 3'-monoiodothyronine (3'-T1) via inner-ring deiodination (IRD). Catalyzes the deiodination of 3-T1 to L-thyronine (T0) via outer-ring deiodination (ORD). Catalyzes the tyrosyl ring deiodinations of 3,3',5,5'-tetraiodothyronamine, 3,3',5'-triiodothyronamine, 3,5,3'-triiodothyronamine, 3,5-diiodothyronamine, 3,3'-diiodothyronamine and 3-iodothyronamine. The chain is Thyroxine 5-deiodinase (DIO3) from Homo sapiens (Human).